The chain runs to 216 residues: 4-hydroxy-tetrahydrodipicolinate reductase (216 aa).

NAD(+) is bound by residues 7-12 (GYSGRM), 71-73 (GTT), and 95-98 (AYNF). Histidine 127 serves as the catalytic Proton donor/acceptor. A (S)-2,3,4,5-tetrahydrodipicolinate-binding site is contributed by histidine 128. Lysine 131 acts as the Proton donor in catalysis. 137 to 138 (GT) lines the (S)-2,3,4,5-tetrahydrodipicolinate pocket.

The protein belongs to the DapB family.

The protein localises to the cytoplasm. The catalysed reaction is (S)-2,3,4,5-tetrahydrodipicolinate + NAD(+) + H2O = (2S,4S)-4-hydroxy-2,3,4,5-tetrahydrodipicolinate + NADH + H(+). It catalyses the reaction (S)-2,3,4,5-tetrahydrodipicolinate + NADP(+) + H2O = (2S,4S)-4-hydroxy-2,3,4,5-tetrahydrodipicolinate + NADPH + H(+). It participates in amino-acid biosynthesis; L-lysine biosynthesis via DAP pathway; (S)-tetrahydrodipicolinate from L-aspartate: step 4/4. Functionally, catalyzes the conversion of 4-hydroxy-tetrahydrodipicolinate (HTPA) to tetrahydrodipicolinate. This chain is 4-hydroxy-tetrahydrodipicolinate reductase, found in Thermotoga sp. (strain RQ2).